We begin with the raw amino-acid sequence, 161 residues long: SsrA-binding protein (161 aa).

Belongs to the SmpB family.

The protein localises to the cytoplasm. In terms of biological role, required for rescue of stalled ribosomes mediated by trans-translation. Binds to transfer-messenger RNA (tmRNA), required for stable association of tmRNA with ribosomes. tmRNA and SmpB together mimic tRNA shape, replacing the anticodon stem-loop with SmpB. tmRNA is encoded by the ssrA gene; the 2 termini fold to resemble tRNA(Ala) and it encodes a 'tag peptide', a short internal open reading frame. During trans-translation Ala-aminoacylated tmRNA acts like a tRNA, entering the A-site of stalled ribosomes, displacing the stalled mRNA. The ribosome then switches to translate the ORF on the tmRNA; the nascent peptide is terminated with the 'tag peptide' encoded by the tmRNA and targeted for degradation. The ribosome is freed to recommence translation, which seems to be the essential function of trans-translation. The sequence is that of SsrA-binding protein from Vibrio vulnificus (strain YJ016).